The primary structure comprises 325 residues: Glutarate 2-hydroxylase (325 aa).

3 residues coordinate Fe cation: histidine 160, aspartate 162, and histidine 292.

Belongs to the glutarate hydroxylase family. Homotetramer. The cofactor is Fe(2+).

The catalysed reaction is glutarate + 2-oxoglutarate + O2 = (S)-2-hydroxyglutarate + succinate + CO2. It participates in amino-acid degradation. Its function is as follows. Acts as an alpha-ketoglutarate-dependent dioxygenase catalyzing hydroxylation of glutarate (GA) to L-2-hydroxyglutarate (L2HG). Functions in a L-lysine degradation pathway that proceeds via cadaverine, glutarate and L-2-hydroxyglutarate. The chain is Glutarate 2-hydroxylase from Escherichia coli O6:K15:H31 (strain 536 / UPEC).